Consider the following 457-residue polypeptide: Embryogenesis-associated protein EMB8 (457 aa).

Residues 39–59 (KKPAAGACEEQDELTSGSAAR) are disordered. An AB hydrolase-1 domain is found at 151-391 (PVLILLPGLT…LVVTPNGGHL (241 aa)). Catalysis depends on charge relay system residues serine 231, aspartate 361, and histidine 390. Over residues 438 to 447 (VDSVHTRETN) the composition is skewed to basic and acidic residues. Residues 438 to 457 (VDSVHTRETNNYKSPIENVN) form a disordered region. The segment covering 448–457 (NYKSPIENVN) has biased composition (polar residues).

It belongs to the AB hydrolase superfamily. AB hydrolase 4 family.

The sequence is that of Embryogenesis-associated protein EMB8 (EMB8) from Picea glauca (White spruce).